The primary structure comprises 332 residues: Cytoplasmic phosphatidylinositol transfer protein 1 (332 aa).

Phosphoserine is present on residues serine 119, serine 122, serine 270, and serine 274. Positions 272–281 are enriched in low complexity; the sequence is PSSAPSTPLS. A disordered region spans residues 272-332; the sequence is PSSAPSTPLS…SEKPCRPKSE (61 aa). Threonine 278 is subject to Phosphothreonine.

Belongs to the PtdIns transfer protein family. PI transfer class IIB subfamily. Widely expressed in brain, with expression in the gray matters of pre- and postnatal brains. In terms of tissue distribution, weakly expressed in brain and is rather confined to the embryonic stage.

The protein resides in the cytoplasm. Its subcellular location is the nucleus. It carries out the reaction a 1,2-diacyl-sn-glycero-3-phospho-(1D-myo-inositol)(in) = a 1,2-diacyl-sn-glycero-3-phospho-(1D-myo-inositol)(out). The catalysed reaction is a 1,2-diacyl-sn-glycero-3-phosphate(in) = a 1,2-diacyl-sn-glycero-3-phosphate(out). In terms of biological role, catalyzes the transfer of phosphatidylinositol (PI) and phosphatidic acid (PA) between membranes. Binds PA derived from the phospholipase D signaling pathway and among the cellular PA species, preferably binds to the C16:0/16:1 and C16:1/18:1 PA species. Specifically binds to phosphatidylinositol but not to other phospholipids and may play a role in the phosphoinositide-mediated signaling in the neural development. The chain is Cytoplasmic phosphatidylinositol transfer protein 1 (Pitpnc1) from Mus musculus (Mouse).